The sequence spans 182 residues: ATP-dependent protease subunit HslV (182 aa).

Thr2 is an active-site residue. Na(+) is bound by residues Gly157, Cys160, and Thr163.

Belongs to the peptidase T1B family. HslV subfamily. A double ring-shaped homohexamer of HslV is capped on each side by a ring-shaped HslU homohexamer. The assembly of the HslU/HslV complex is dependent on binding of ATP.

It is found in the cytoplasm. The enzyme catalyses ATP-dependent cleavage of peptide bonds with broad specificity.. With respect to regulation, allosterically activated by HslU binding. Its function is as follows. Protease subunit of a proteasome-like degradation complex believed to be a general protein degrading machinery. The polypeptide is ATP-dependent protease subunit HslV (Sodalis glossinidius (strain morsitans)).